The following is a 702-amino-acid chain: Arginine decarboxylase 1 (702 aa).

Position 151 is an N6-(pyridoxal phosphate)lysine (Lys151). 336 to 346 (IDVGGGLGIDY) contributes to the substrate binding site. A compositionally biased stretch (low complexity) spans 668 to 686 (ASGESSGMSSDSEGSAAGA). The tract at residues 668 to 702 (ASGESSGMSSDSEGSAAGAAEEDDDEWEFMRGLTV) is disordered.

The protein belongs to the Orn/Lys/Arg decarboxylase class-II family. SpeA subfamily. Pyridoxal 5'-phosphate is required as a cofactor. The cofactor is Mg(2+). In terms of tissue distribution, expressed in roots, leaves and stems (at protein level).

The enzyme catalyses L-arginine + H(+) = agmatine + CO2. Its pathway is amine and polyamine biosynthesis; agmatine biosynthesis; agmatine from L-arginine: step 1/1. This Oryza sativa subsp. japonica (Rice) protein is Arginine decarboxylase 1 (ADC1).